Consider the following 423-residue polypeptide: MKYTLLGFGISNKEILKYLLKKGERVFVSEGKKLSEVDKEFLNSFGVDFEENGHTEKVLDSDVILVSPGIHFENDIIKKAKENNIKIDTEISFCLKEFEKINWFPYVIAVTGSVGKSTTVSMIQHVLNKYKRTLLAGNIGIPIAKLLNDDLRADYLVLEVSSFQLFWSDKFKPNISSILNIYPNHLNWHPEMSHYINSKFKITLSQDENDFFVYNPNDEYIVKNLGKVKAKKVPFKYDFEIHQLPEHLRYKQTIENVAAAKTIVEVAGFEFNIDFLEDFEKLPHRMEYVTEINGVKFFNDSKATNAAAVIRAVENFDGKLHLIMAGIGKNEDYTLLRKVLKNSVKTVALVGPIAKDVKPYLDGINFMECSSINEAVNQLFRIANPGDVIMLSPGGASFDAFKNFEERGEYFKQLVFQLKEGKS.

112 to 118 (GSVGKST) lines the ATP pocket.

The protein belongs to the MurCDEF family.

Its subcellular location is the cytoplasm. It carries out the reaction UDP-N-acetyl-alpha-D-muramoyl-L-alanine + D-glutamate + ATP = UDP-N-acetyl-alpha-D-muramoyl-L-alanyl-D-glutamate + ADP + phosphate + H(+). It functions in the pathway cell wall biogenesis; peptidoglycan biosynthesis. In terms of biological role, cell wall formation. Catalyzes the addition of glutamate to the nucleotide precursor UDP-N-acetylmuramoyl-L-alanine (UMA). The protein is UDP-N-acetylmuramoylalanine--D-glutamate ligase of Thermosipho africanus (strain TCF52B).